Here is a 362-residue protein sequence, read N- to C-terminus: Probable cysteine protease RDL2 (362 aa).

Residues methionine 1–alanine 28 form the signal peptide. Positions threonine 29–valine 129 are cleaved as a propeptide — activation peptide. N-linked (GlcNAc...) asparagine glycosylation occurs at asparagine 36. Disulfide bonds link cysteine 151–cysteine 194 and cysteine 185–cysteine 228. Cysteine 154 is an active-site residue. Asparagine 234 is a glycosylation site (N-linked (GlcNAc...) asparagine). Residues cysteine 287 and cysteine 338 are joined by a disulfide bond. Active-site residues include histidine 293 and asparagine 313.

It belongs to the peptidase C1 family.

Functionally, probable thiol protease. This Arabidopsis thaliana (Mouse-ear cress) protein is Probable cysteine protease RDL2.